Reading from the N-terminus, the 333-residue chain is Holliday junction branch migration complex subunit RuvB (333 aa).

A large ATPase domain (RuvB-L) region spans residues 1 to 182; that stretch reads MEERLVSGDV…FGVISRLEYY (182 aa). ATP-binding positions include L21, R22, G63, K66, T67, T68, 129 to 131, R172, Y182, and R219; that span reads EDY. Position 67 (T67) interacts with Mg(2+). Positions 183–253 are small ATPAse domain (RuvB-S); it reads TTEHLTQIVM…LAKEALELLQ (71 aa). A head domain (RuvB-H) region spans residues 256 to 333; sequence RLGLDHIDHK…EHFGMEVPKQ (78 aa). DNA contacts are provided by R311 and R316.

Belongs to the RuvB family. In terms of assembly, homohexamer. Forms an RuvA(8)-RuvB(12)-Holliday junction (HJ) complex. HJ DNA is sandwiched between 2 RuvA tetramers; dsDNA enters through RuvA and exits via RuvB. An RuvB hexamer assembles on each DNA strand where it exits the tetramer. Each RuvB hexamer is contacted by two RuvA subunits (via domain III) on 2 adjacent RuvB subunits; this complex drives branch migration. In the full resolvosome a probable DNA-RuvA(4)-RuvB(12)-RuvC(2) complex forms which resolves the HJ.

It localises to the cytoplasm. It catalyses the reaction ATP + H2O = ADP + phosphate + H(+). Functionally, the RuvA-RuvB-RuvC complex processes Holliday junction (HJ) DNA during genetic recombination and DNA repair, while the RuvA-RuvB complex plays an important role in the rescue of blocked DNA replication forks via replication fork reversal (RFR). RuvA specifically binds to HJ cruciform DNA, conferring on it an open structure. The RuvB hexamer acts as an ATP-dependent pump, pulling dsDNA into and through the RuvAB complex. RuvB forms 2 homohexamers on either side of HJ DNA bound by 1 or 2 RuvA tetramers; 4 subunits per hexamer contact DNA at a time. Coordinated motions by a converter formed by DNA-disengaged RuvB subunits stimulates ATP hydrolysis and nucleotide exchange. Immobilization of the converter enables RuvB to convert the ATP-contained energy into a lever motion, pulling 2 nucleotides of DNA out of the RuvA tetramer per ATP hydrolyzed, thus driving DNA branch migration. The RuvB motors rotate together with the DNA substrate, which together with the progressing nucleotide cycle form the mechanistic basis for DNA recombination by continuous HJ branch migration. Branch migration allows RuvC to scan DNA until it finds its consensus sequence, where it cleaves and resolves cruciform DNA. This Geobacillus sp. (strain WCH70) protein is Holliday junction branch migration complex subunit RuvB.